A 571-amino-acid polypeptide reads, in one-letter code: Potassium-transporting ATPase potassium-binding subunit (571 aa).

11 helical membrane-spanning segments follow: residues 5-25, 64-84, 136-156, 178-198, 254-274, 285-305, 330-350, 357-379, 421-441, 488-508, and 527-547; these read GWTQ…PLGW, LGYA…LYAI, GLTH…VALI, ILYV…WQGI, LSNF…TNVF, WAIL…AYWA, FDIA…CGAV, FTAL…IGGV, MLGI…ATVL, LAVG…AIAG, and GALF…LTFF.

This sequence belongs to the KdpA family. The system is composed of three essential subunits: KdpA, KdpB and KdpC.

It is found in the cell inner membrane. Functionally, part of the high-affinity ATP-driven potassium transport (or Kdp) system, which catalyzes the hydrolysis of ATP coupled with the electrogenic transport of potassium into the cytoplasm. This subunit binds the periplasmic potassium ions and delivers the ions to the membrane domain of KdpB through an intramembrane tunnel. The polypeptide is Potassium-transporting ATPase potassium-binding subunit (Methylobacterium nodulans (strain LMG 21967 / CNCM I-2342 / ORS 2060)).